Reading from the N-terminus, the 229-residue chain is Putative germin-like protein 12-3 (229 aa).

The signal sequence occupies residues Met1–Ala22. Cys32 and Cys47 are joined by a disulfide. Residues Ala62–Asp217 form the Cupin type-1 domain. Asn78 is a glycosylation site (N-linked (GlcNAc...) asparagine). Mn(2+) contacts are provided by His111, His113, Glu118, and His162.

The protein belongs to the germin family. In terms of assembly, oligomer (believed to be a pentamer but probably hexamer).

The protein resides in the secreted. Its subcellular location is the extracellular space. It is found in the apoplast. May play a role in plant defense. Probably has no oxalate oxidase activity even if the active site is conserved. The protein is Putative germin-like protein 12-3 of Oryza sativa subsp. japonica (Rice).